A 752-amino-acid polypeptide reads, in one-letter code: Translation initiation factor IF-2 (752 aa).

Residues 148 to 159 (KKVKDKNKKEEP) show a composition bias toward basic and acidic residues. The disordered stretch occupies residues 148–170 (KKVKDKNKKEEPAVTPSTAPRKK). A tr-type G domain is found at 250–419 (PRPPIVTVMG…ALQAEIMELK (170 aa)). A G1 region spans residues 259 to 266 (GHVDHGKT). 259-266 (GHVDHGKT) contacts GTP. Residues 284–288 (GITQH) are G2. The segment at 305–308 (DTPG) is G3. GTP-binding positions include 305 to 309 (DTPGH) and 359 to 362 (NKID). Positions 359–362 (NKID) are G4. Residues 395–397 (SAK) are G5.

It belongs to the TRAFAC class translation factor GTPase superfamily. Classic translation factor GTPase family. IF-2 subfamily.

The protein resides in the cytoplasm. Functionally, one of the essential components for the initiation of protein synthesis. Protects formylmethionyl-tRNA from spontaneous hydrolysis and promotes its binding to the 30S ribosomal subunits. Also involved in the hydrolysis of GTP during the formation of the 70S ribosomal complex. In Thermodesulfovibrio yellowstonii (strain ATCC 51303 / DSM 11347 / YP87), this protein is Translation initiation factor IF-2.